An 89-amino-acid chain; its full sequence is Chromosomal protein MC1a (89 aa).

Protects DNA against thermal denaturation and modulates transcription. The sequence is that of Chromosomal protein MC1a from Methanothrix soehngenii (Methanosaeta concilii).